A 326-amino-acid polypeptide reads, in one-letter code: tRNA-modifying protein YgfZ (326 aa).

Residues W27 and W189 each coordinate folate.

This sequence belongs to the tRNA-modifying YgfZ family.

It is found in the cytoplasm. Its function is as follows. Folate-binding protein involved in regulating the level of ATP-DnaA and in the modification of some tRNAs. It is probably a key factor in regulatory networks that act via tRNA modification, such as initiation of chromosomal replication. This chain is tRNA-modifying protein YgfZ, found in Salmonella schwarzengrund (strain CVM19633).